The sequence spans 155 residues: Interleukin-2 (155 aa).

The signal sequence occupies residues 1-20 (MYSRQLASCVALALVLLANS). An O-linked (GalNAc...) threonine glycan is attached at T23. An intrachain disulfide couples C78 to C126.

The protein belongs to the IL-2 family.

Its subcellular location is the secreted. Cytokine produced by activated CD4-positive helper T-cells and to a lesser extend activated CD8-positive T-cells and natural killer (NK) cells that plays pivotal roles in the immune response and tolerance. Binds to a receptor complex composed of either the high-affinity trimeric IL-2R (IL2RA/CD25, IL2RB/CD122 and IL2RG/CD132) or the low-affinity dimeric IL-2R (IL2RB and IL2RG). Interaction with the receptor leads to oligomerization and conformation changes in the IL-2R subunits resulting in downstream signaling starting with phosphorylation of JAK1 and JAK3. In turn, JAK1 and JAK3 phosphorylate the receptor to form a docking site leading to the phosphorylation of several substrates including STAT5. This process leads to activation of several pathways including STAT, phosphoinositide-3-kinase/PI3K and mitogen-activated protein kinase/MAPK pathways. Functions as a T-cell growth factor and can increase NK-cell cytolytic activity as well. Promotes strong proliferation of activated B-cells and subsequently immunoglobulin production. Plays a pivotal role in regulating the adaptive immune system by controlling the survival and proliferation of regulatory T-cells, which are required for the maintenance of immune tolerance. Moreover, participates in the differentiation and homeostasis of effector T-cell subsets, including Th1, Th2, Th17 as well as memory CD8-positive T-cells. The sequence is that of Interleukin-2 (IL2) from Meriones unguiculatus (Mongolian jird).